The sequence spans 558 residues: Chaperonin GroEL 1 (558 aa).

ATP contacts are provided by residues Thr29–Pro32, Asp86–Thr90, Gly413, and Asp494.

This sequence belongs to the chaperonin (HSP60) family. In terms of assembly, forms a cylinder of 14 subunits composed of two heptameric rings stacked back-to-back. Interacts with the co-chaperonin GroES.

The protein resides in the cytoplasm. The catalysed reaction is ATP + H2O + a folded polypeptide = ADP + phosphate + an unfolded polypeptide.. Functionally, together with its co-chaperonin GroES, plays an essential role in assisting protein folding. The GroEL-GroES system forms a nano-cage that allows encapsulation of the non-native substrate proteins and provides a physical environment optimized to promote and accelerate protein folding. This Acaryochloris marina (strain MBIC 11017) protein is Chaperonin GroEL 1.